The chain runs to 467 residues: Glutamate--tRNA ligase (467 aa).

Residues 9 to 19 carry the 'HIGH' region motif; sequence PSPTGFLHIGG. The short motif at 250–254 is the 'KMSKS' region element; the sequence is KLSKR. Position 253 (K253) interacts with ATP.

It belongs to the class-I aminoacyl-tRNA synthetase family. Glutamate--tRNA ligase type 1 subfamily. As to quaternary structure, monomer.

Its subcellular location is the cytoplasm. The catalysed reaction is tRNA(Glu) + L-glutamate + ATP = L-glutamyl-tRNA(Glu) + AMP + diphosphate. In terms of biological role, catalyzes the attachment of glutamate to tRNA(Glu) in a two-step reaction: glutamate is first activated by ATP to form Glu-AMP and then transferred to the acceptor end of tRNA(Glu). This is Glutamate--tRNA ligase from Mesomycoplasma hyopneumoniae (strain 7448) (Mycoplasma hyopneumoniae).